We begin with the raw amino-acid sequence, 565 residues long: uncharacterized protein (565 aa).

This is an uncharacterized protein from Acanthamoeba polyphaga mimivirus (APMV).